Reading from the N-terminus, the 121-residue chain is Ribonuclease P protein component (121 aa).

Belongs to the RnpA family. In terms of assembly, consists of a catalytic RNA component (M1 or rnpB) and a protein subunit.

The enzyme catalyses Endonucleolytic cleavage of RNA, removing 5'-extranucleotides from tRNA precursor.. Its function is as follows. RNaseP catalyzes the removal of the 5'-leader sequence from pre-tRNA to produce the mature 5'-terminus. It can also cleave other RNA substrates such as 4.5S RNA. The protein component plays an auxiliary but essential role in vivo by binding to the 5'-leader sequence and broadening the substrate specificity of the ribozyme. The polypeptide is Ribonuclease P protein component (Neisseria gonorrhoeae (strain ATCC 700825 / FA 1090)).